The chain runs to 395 residues: ATP phosphoribosyltransferase regulatory subunit (395 aa).

This sequence belongs to the class-II aminoacyl-tRNA synthetase family. HisZ subfamily. Heteromultimer composed of HisG and HisZ subunits.

It is found in the cytoplasm. It functions in the pathway amino-acid biosynthesis; L-histidine biosynthesis; L-histidine from 5-phospho-alpha-D-ribose 1-diphosphate: step 1/9. Functionally, required for the first step of histidine biosynthesis. May allow the feedback regulation of ATP phosphoribosyltransferase activity by histidine. This is ATP phosphoribosyltransferase regulatory subunit from Pseudomonas fluorescens (strain Pf0-1).